The primary structure comprises 190 residues: Elongation factor P-like protein (190 aa).

Belongs to the elongation factor P family.

This Shigella boydii serotype 4 (strain Sb227) protein is Elongation factor P-like protein.